Reading from the N-terminus, the 877-residue chain is Phosphoenolpyruvate carboxylase (877 aa).

Residues His137 and Lys544 contribute to the active site.

The protein belongs to the PEPCase type 1 family. Mg(2+) is required as a cofactor.

It catalyses the reaction oxaloacetate + phosphate = phosphoenolpyruvate + hydrogencarbonate. Its function is as follows. Forms oxaloacetate, a four-carbon dicarboxylic acid source for the tricarboxylic acid cycle. This is Phosphoenolpyruvate carboxylase from Edwardsiella ictaluri (strain 93-146).